The primary structure comprises 262 residues: Phosphatidylserine decarboxylase proenzyme (262 aa).

Catalysis depends on charge relay system; for autoendoproteolytic cleavage activity residues aspartate 86, histidine 142, and serine 226. Catalysis depends on serine 226, which acts as the Schiff-base intermediate with substrate; via pyruvic acid; for decarboxylase activity. A Pyruvic acid (Ser); by autocatalysis modification is found at serine 226.

It belongs to the phosphatidylserine decarboxylase family. PSD-B subfamily. Prokaryotic type I sub-subfamily. In terms of assembly, heterodimer of a large membrane-associated beta subunit and a small pyruvoyl-containing alpha subunit. Pyruvate serves as cofactor. Post-translationally, is synthesized initially as an inactive proenzyme. Formation of the active enzyme involves a self-maturation process in which the active site pyruvoyl group is generated from an internal serine residue via an autocatalytic post-translational modification. Two non-identical subunits are generated from the proenzyme in this reaction, and the pyruvate is formed at the N-terminus of the alpha chain, which is derived from the carboxyl end of the proenzyme. The autoendoproteolytic cleavage occurs by a canonical serine protease mechanism, in which the side chain hydroxyl group of the serine supplies its oxygen atom to form the C-terminus of the beta chain, while the remainder of the serine residue undergoes an oxidative deamination to produce ammonia and the pyruvoyl prosthetic group on the alpha chain. During this reaction, the Ser that is part of the protease active site of the proenzyme becomes the pyruvoyl prosthetic group, which constitutes an essential element of the active site of the mature decarboxylase.

The protein localises to the cell membrane. It catalyses the reaction a 1,2-diacyl-sn-glycero-3-phospho-L-serine + H(+) = a 1,2-diacyl-sn-glycero-3-phosphoethanolamine + CO2. It functions in the pathway phospholipid metabolism; phosphatidylethanolamine biosynthesis; phosphatidylethanolamine from CDP-diacylglycerol: step 2/2. Catalyzes the formation of phosphatidylethanolamine (PtdEtn) from phosphatidylserine (PtdSer). This Bacillus anthracis protein is Phosphatidylserine decarboxylase proenzyme.